The sequence spans 354 residues: G protein alpha o subunit (354 aa).

The N-myristoyl glycine moiety is linked to residue Gly-2. Cys-3 carries S-palmitoyl cysteine lipidation. A G-alpha domain is found at 32 to 354 (KDIKLLLLGA…ANNLRGCGLY (323 aa)). Positions 35 to 48 (KLLLLGAGESGKST) are G1 motif. Residues 40 to 47 (GAGESGKS), 176 to 182 (LRTRVKT), 201 to 205 (DVGGQ), 270 to 273 (NKKD), and Ala-326 contribute to the GTP site. Mg(2+) is bound by residues Ser-47 and Thr-182. The segment at 174–182 (DILRTRVKT) is G2 motif. The interval 197–206 (FKLFDVGGQR) is G3 motif. The segment at 266 to 273 (ILFLNKKD) is G4 motif. Positions 324–329 (TCATDT) are G5 motif.

This sequence belongs to the G-alpha family. G(i/o/t/z) subfamily. As to quaternary structure, g proteins are composed of 3 units; alpha, beta and gamma. The alpha chain contains the guanine nucleotide binding site. In terms of tissue distribution, expressed primarily in neuronal cell bodies in the brain, optic lobe, and thoracic and abdominal ganglia. Also expressed in antenna, oocytes and ovarian nurse cells.

Guanine nucleotide-binding proteins (G proteins) are involved as modulators or transducers in various transmembrane signaling systems. Plays a role in glial cell differentiation during embryogenesis; loco, Galphai and the G-protein coupled receptor, moody, are required in the surface glia to achieve effective insulation of the nerve cord. The chain is G protein alpha o subunit (Galphao) from Drosophila melanogaster (Fruit fly).